The chain runs to 1026 residues: Tyrosine-protein phosphatase 1 (1026 aa).

One can recognise an FERM domain in the interval 29-315 (IRCTVTFLDS…EQHTFFRLKT (287 aa)). Disordered stretches follow at residues 376 to 396 (SIDS…LPSS), 430 to 456 (PLTT…SLRQ), 489 to 515 (GIHA…KSAN), and 584 to 616 (SFAS…DQVV). A compositionally biased stretch (polar residues) spans 446-456 (DSESSAPSLRQ). Residues 600–609 (SPQSNKSSSP) are compositionally biased toward low complexity. One can recognise a PDZ domain in the interval 617–689 (TIKMRPDRHG…DHVVQFIRSA (73 aa)). The region spanning 753-1011 (VVDHFEMLYR…TFVCESILRA (259 aa)) is the Tyrosine-protein phosphatase domain. Substrate contacts are provided by residues Asp920, 952–958 (CSAGIGR), and Gln996. Cys952 acts as the Phosphocysteine intermediate in catalysis.

The protein belongs to the protein-tyrosine phosphatase family. Non-receptor class subfamily.

It is found in the cytoplasm. The protein localises to the cytoskeleton. It catalyses the reaction O-phospho-L-tyrosyl-[protein] + H2O = L-tyrosyl-[protein] + phosphate. This chain is Tyrosine-protein phosphatase 1 (ptp-1), found in Caenorhabditis elegans.